We begin with the raw amino-acid sequence, 214 residues long: Pyridoxine/pyridoxamine 5'-phosphate oxidase (214 aa).

Substrate contacts are provided by residues 9–12 (RKDY) and lysine 67. FMN is bound by residues 62-67 (RMVLLK), 77-78 (FT), arginine 83, lysine 84, and glutamine 106. 3 residues coordinate substrate: tyrosine 124, arginine 128, and serine 132. Residues 141 to 142 (QS) and tryptophan 186 contribute to the FMN site. A substrate-binding site is contributed by 192 to 194 (RLH). Arginine 196 serves as a coordination point for FMN.

Belongs to the pyridoxamine 5'-phosphate oxidase family. Homodimer. FMN is required as a cofactor.

The catalysed reaction is pyridoxamine 5'-phosphate + O2 + H2O = pyridoxal 5'-phosphate + H2O2 + NH4(+). It catalyses the reaction pyridoxine 5'-phosphate + O2 = pyridoxal 5'-phosphate + H2O2. The protein operates within cofactor metabolism; pyridoxal 5'-phosphate salvage; pyridoxal 5'-phosphate from pyridoxamine 5'-phosphate: step 1/1. Its pathway is cofactor metabolism; pyridoxal 5'-phosphate salvage; pyridoxal 5'-phosphate from pyridoxine 5'-phosphate: step 1/1. Its function is as follows. Catalyzes the oxidation of either pyridoxine 5'-phosphate (PNP) or pyridoxamine 5'-phosphate (PMP) into pyridoxal 5'-phosphate (PLP). The polypeptide is Pyridoxine/pyridoxamine 5'-phosphate oxidase (Trichormus variabilis (strain ATCC 29413 / PCC 7937) (Anabaena variabilis)).